A 49-amino-acid polypeptide reads, in one-letter code: Large ribosomal subunit protein bL33A (49 aa).

This sequence belongs to the bacterial ribosomal protein bL33 family.

This Staphylococcus aureus (strain COL) protein is Large ribosomal subunit protein bL33A.